The sequence spans 370 residues: tRNA-specific 2-thiouridylase MnmA (370 aa).

Residues 9–16 (GMSGGVDS) and Met35 contribute to the ATP site. Positions 95-97 (NPD) are interaction with target base in tRNA. The active-site Nucleophile is Cys100. An intrachain disulfide couples Cys100 to Cys196. Residue Gly124 coordinates ATP. The interval 146-148 (KDQ) is interaction with tRNA. The active-site Cysteine persulfide intermediate is Cys196. Residues 308 to 309 (RY) form an interaction with tRNA region.

Belongs to the MnmA/TRMU family.

It localises to the cytoplasm. It carries out the reaction S-sulfanyl-L-cysteinyl-[protein] + uridine(34) in tRNA + AH2 + ATP = 2-thiouridine(34) in tRNA + L-cysteinyl-[protein] + A + AMP + diphosphate + H(+). Catalyzes the 2-thiolation of uridine at the wobble position (U34) of tRNA, leading to the formation of s(2)U34. The chain is tRNA-specific 2-thiouridylase MnmA from Ralstonia nicotianae (strain ATCC BAA-1114 / GMI1000) (Ralstonia solanacearum).